Consider the following 330-residue polypeptide: Aspartate--ammonia ligase (330 aa).

The protein belongs to the class-II aminoacyl-tRNA synthetase family. AsnA subfamily.

The protein resides in the cytoplasm. The catalysed reaction is L-aspartate + NH4(+) + ATP = L-asparagine + AMP + diphosphate + H(+). It participates in amino-acid biosynthesis; L-asparagine biosynthesis; L-asparagine from L-aspartate (ammonia route): step 1/1. The sequence is that of Aspartate--ammonia ligase from Streptococcus agalactiae serotype III (strain NEM316).